The primary structure comprises 345 residues: Annexin A9 (345 aa).

Annexin repeat units lie at residues 41–112, 113–184, 197–266, and 270–341; these read FSVD…ALLQ, PAAQ…ALSK, NLEE…SLAS, and NTAL…ALCR.

The protein belongs to the annexin family. In terms of assembly, homodimer.

In terms of biological role, may act as a low affinity receptor for acetylcholine. The chain is Annexin A9 (Anxa9) from Mus musculus (Mouse).